The following is a 98-amino-acid chain: NADH-ubiquinone oxidoreductase chain 4L (98 aa).

A run of 3 helical transmembrane segments spans residues 1 to 21, 29 to 49, and 61 to 81; these read MPVV…GLLI, SLLC…VTVL, and IILL…LVMV.

It belongs to the complex I subunit 4L family. Core subunit of respiratory chain NADH dehydrogenase (Complex I) which is composed of 45 different subunits.

Its subcellular location is the mitochondrion inner membrane. The catalysed reaction is a ubiquinone + NADH + 5 H(+)(in) = a ubiquinol + NAD(+) + 4 H(+)(out). In terms of biological role, core subunit of the mitochondrial membrane respiratory chain NADH dehydrogenase (Complex I) which catalyzes electron transfer from NADH through the respiratory chain, using ubiquinone as an electron acceptor. Part of the enzyme membrane arm which is embedded in the lipid bilayer and involved in proton translocation. This is NADH-ubiquinone oxidoreductase chain 4L (MT-ND4L) from Helarctos malayanus (Malayan sun bear).